A 313-amino-acid polypeptide reads, in one-letter code: 2-phosphoglycerate kinase (313 aa).

In terms of domain architecture, ATP-cone spans 8-95 (NKILVKDKDY…LWRRVLKKHS (88 aa)).

The protein belongs to the 2-phosphoglycerate kinase family. The cofactor is a divalent metal cation.

The catalysed reaction is (2R)-2-phosphoglycerate + ATP = (2R)-2,3-bisphosphoglycerate + ADP + H(+). Its pathway is thermoadapter biosynthesis; cyclic 2,3-diphosphoglycerate biosynthesis; cyclic 2,3-diphosphoglycerate from 2-phospho-D-glycerate: step 1/2. Its function is as follows. Catalyzes the phosphorylation of 2-phosphoglycerate to 2,3-diphosphoglycerate. Involved in the biosynthesis of cyclic 2,3-bisphosphoglycerate, a thermoprotectant. This is 2-phosphoglycerate kinase from Methanococcus vannielii (strain ATCC 35089 / DSM 1224 / JCM 13029 / OCM 148 / SB).